The sequence spans 260 residues: Chloride intracellular channel Clic (260 aa).

Residues 42-66 (FCQEYFMDLYLLAELKTISLKVTTV) form a helical membrane-spanning segment.

This sequence belongs to the chloride channel CLIC family. In terms of tissue distribution, expressed in cardiac tubes.

It localises to the mitochondrion. It is found in the membrane. Might insert into membranes and form chloride ion channels. Channel activity depends on the pH. May play a role in ethanol sensitivity. This chain is Chloride intracellular channel Clic, found in Drosophila melanogaster (Fruit fly).